A 188-amino-acid polypeptide reads, in one-letter code: dCTP deaminase (188 aa).

DCTP is bound by residues 111–116 (KSTYAR), 135–137 (TLE), Gln-156, Tyr-170, and Gln-180. Glu-137 (proton donor/acceptor) is an active-site residue.

This sequence belongs to the dCTP deaminase family. As to quaternary structure, homotrimer.

The catalysed reaction is dCTP + H2O + H(+) = dUTP + NH4(+). It participates in pyrimidine metabolism; dUMP biosynthesis; dUMP from dCTP (dUTP route): step 1/2. In terms of biological role, catalyzes the deamination of dCTP to dUTP. In Dichelobacter nodosus (strain VCS1703A), this protein is dCTP deaminase.